A 95-amino-acid polypeptide reads, in one-letter code: Selenoprotein K (95 aa).

Residues 20-42 (LSFLTDMFWGITDFIVMFFQSII) form a helical membrane-spanning segment. The segment at 48–95 (RRGCQNSSSRTRFDDGRGPPGNPRRRMGRIDHNSGPNAPPMSGGGUGR) is disordered. A non-standard amino acid (selenocysteine) is located at residue U93.

Belongs to the selenoprotein K family.

The protein localises to the endoplasmic reticulum membrane. Its subcellular location is the cell membrane. In terms of biological role, required for Ca(2+) flux in immune cells and plays a role in T-cell proliferation and in T-cell and neutrophil migration. Involved in endoplasmic reticulum-associated degradation (ERAD) of soluble glycosylated proteins. Required for cell surface expression of CD36 and involved in macrophage uptake of low-density lipoprotein and in foam cell formation. Required for palmitoylation. This is Selenoprotein K (selenok) from Xenopus tropicalis (Western clawed frog).